We begin with the raw amino-acid sequence, 300 residues long: Pantothenate synthetase (300 aa).

30–37 (MGYLHEGH) lines the ATP pocket. H37 serves as the catalytic Proton donor. Q61 serves as a coordination point for (R)-pantoate. Q61 lines the beta-alanine pocket. Residue 147–150 (GMKD) coordinates ATP. Q153 serves as a coordination point for (R)-pantoate. Residues V176 and 184–187 (KSSR) contribute to the ATP site.

This sequence belongs to the pantothenate synthetase family. In terms of assembly, homodimer.

It is found in the cytoplasm. It catalyses the reaction (R)-pantoate + beta-alanine + ATP = (R)-pantothenate + AMP + diphosphate + H(+). It participates in cofactor biosynthesis; (R)-pantothenate biosynthesis; (R)-pantothenate from (R)-pantoate and beta-alanine: step 1/1. In terms of biological role, catalyzes the condensation of pantoate with beta-alanine in an ATP-dependent reaction via a pantoyl-adenylate intermediate. This Geobacillus kaustophilus (strain HTA426) protein is Pantothenate synthetase.